A 335-amino-acid polypeptide reads, in one-letter code: NADH-quinone oxidoreductase subunit H (335 aa).

The next 8 helical transmembrane spans lie at 11–31 (VILT…CGAL), 81–101 (MIFT…FVVI), 114–134 (IGLL…LFAG), 154–174 (VSYE…VGSF), 187–207 (LWFI…GVAV), 238–258 (FFVG…TLFF), 270–290 (QVPF…FILL), and 307–327 (WKFC…VVLY).

This sequence belongs to the complex I subunit 1 family. In terms of assembly, NDH-1 is composed of 13 different subunits. Subunits NuoA, H, J, K, L, M, N constitute the membrane sector of the complex.

Its subcellular location is the cell inner membrane. It carries out the reaction a quinone + NADH + 5 H(+)(in) = a quinol + NAD(+) + 4 H(+)(out). In terms of biological role, NDH-1 shuttles electrons from NADH, via FMN and iron-sulfur (Fe-S) centers, to quinones in the respiratory chain. The immediate electron acceptor for the enzyme in this species is believed to be ubiquinone. Couples the redox reaction to proton translocation (for every two electrons transferred, four hydrogen ions are translocated across the cytoplasmic membrane), and thus conserves the redox energy in a proton gradient. This subunit may bind ubiquinone. This Pseudomonas entomophila (strain L48) protein is NADH-quinone oxidoreductase subunit H.